An 86-amino-acid chain; its full sequence is OMEGA-stichotoxin-Shd4a (86 aa).

A signal peptide spans 1-23; that stretch reads MASFRTLFACVVILCCVLWSSMA. Residues 24 to 36 constitute a propeptide that is removed on maturation; sequence RYGEDMEVETEMN. Positions 40 to 82 constitute an EGF-like domain; that stretch reads EGVRCTGQHASSFCLNGGTCRHIASLGEYYCICPGDYTGHRCD. 3 cysteine pairs are disulfide-bonded: Cys-44/Cys-59, Cys-53/Cys-70, and Cys-72/Cys-81.

This sequence belongs to the EGF domain peptide family.

Its subcellular location is the secreted. It is found in the nematocyst. Functionally, has both toxic and EGF activity. Its EGF activity consists of rounding cells (morphological change) and inducing tyrosine phosphorylation of the EGFR in A431 cells, but with a lower potency that human EGF. The chain is OMEGA-stichotoxin-Shd4a from Stichodactyla haddoni (Saddle carpet anemone).